The primary structure comprises 223 residues: Protein Wnt-1 (223 aa).

Cystine bridges form between Cys7–Cys24, Cys72–Cys86, and Cys74–Cys81. Residue Ser78 is the site of O-palmitoleoyl serine; by PORCN attachment. The interval Val110–Lys135 is disordered. The segment covering Ser125–Lys135 has biased composition (polar residues). Disulfide bonds link Cys152/Cys183, Cys168/Cys178, Cys182/Cys222, Cys198/Cys213, Cys200/Cys210, and Cys205/Cys206. The N-linked (GlcNAc...) asparagine glycan is linked to Asn169.

This sequence belongs to the Wnt family. Palmitoleoylation is required for efficient binding to frizzled receptors. Palmitoleoylation is necessary for proper trafficking to cell surface. Depalmitoleoylated by NOTUM, leading to inhibit Wnt signaling pathway.

It is found in the secreted. Its subcellular location is the extracellular space. It localises to the extracellular matrix. Its function is as follows. Ligand for members of the frizzled family of seven transmembrane receptors. Probable developmental protein. The chain is Protein Wnt-1 (WNT-1) from Strongylocentrotus purpuratus (Purple sea urchin).